Here is a 388-residue protein sequence, read N- to C-terminus: Yellow-related salivary protein SP03 (388 aa).

The first 18 residues, 1-18 (MKIFLCLIAVVSLQGVLA), serve as a signal peptide directing secretion. Residue Asn-29 is glycosylated (N-linked (GlcNAc...) asparagine).

It belongs to the major royal jelly protein family. As to expression, female salivary gland (at protein level).

The protein resides in the secreted. Its function is as follows. Probably modulates blood feeding of sand flies on vertebrate species by binding and sequestering different mediators involved in the host response. Binds biogenic amines. Binds noradrenaline with medium affinity. Binds octopamine with low affinity. Poorly binds histamine, adrenaline and serotonin. The chain is Yellow-related salivary protein SP03 from Phlebotomus perniciosus (Phlebotomine sand fly).